The primary structure comprises 306 residues: Ribosomal RNA small subunit methyltransferase H (306 aa).

S-adenosyl-L-methionine contacts are provided by residues 37-39, D56, D102, and Q109; that span reads GGH.

The protein belongs to the methyltransferase superfamily. RsmH family.

The protein resides in the cytoplasm. The enzyme catalyses cytidine(1402) in 16S rRNA + S-adenosyl-L-methionine = N(4)-methylcytidine(1402) in 16S rRNA + S-adenosyl-L-homocysteine + H(+). Its function is as follows. Specifically methylates the N4 position of cytidine in position 1402 (C1402) of 16S rRNA. This Nautilia profundicola (strain ATCC BAA-1463 / DSM 18972 / AmH) protein is Ribosomal RNA small subunit methyltransferase H.